Reading from the N-terminus, the 340-residue chain is Armadillo repeat-containing protein 12 (340 aa).

The interval 1–101 (MGKSIPQYLG…SITRCVYLLE (101 aa)) is interaction with TBC1D15. ARM repeat units lie at residues 100–139 (LEAE…AFSG), 179–218 (LPDY…YLAQ), and 278–318 (SLHE…SLQY).

Interacts with TBC1D15, TBC1D21, GK2 and IMMT. Interacts with VDAC2 and VDAC3 in a TBC1D21-dependent manner. Interacts (via ARM domains) with RBBP4. Expressed in testis. Highly expressed in the mid-piece of the elongated and late spermatids. Expressed at higher levels in neuroblastoma tissues and cell lines, than those of normal dorsal ganglia (at protein level). Expressed in breast cancer, colon cancer, hepatocellular carcinoma, lung cancer, pancreas cancer, prostate cancer, renal cancer and gastric cancer, but not in their normal counterparts.

It localises to the nucleus. It is found in the mitochondrion outer membrane. Essential for male fertility and sperm mitochondrial sheath formation. Required for proper mitochondrial elongation and coiling along the flagellum during the formation of the mitochondrial sheath. Facilitates the growth and aggressiveness of neuroblastoma cells. Increases the EZH2 activity and H3K27me3 levels in a RBBP4-dependent manner, and facilitates the enrichment of polycomb repressive complex 2 and H3K27me3 on gene promoters, resulting in transcriptional repression of tumor suppressors affecting the proliferation, invasion, and metastasis of tumor cells. This is Armadillo repeat-containing protein 12 (ARMC12) from Homo sapiens (Human).